A 393-amino-acid chain; its full sequence is Formate-dependent phosphoribosylglycinamide formyltransferase (393 aa).

N(1)-(5-phospho-beta-D-ribosyl)glycinamide-binding positions include 22–23 and glutamate 82; that span reads EL. ATP contacts are provided by residues arginine 114, lysine 155, 160 to 165, 195 to 198, and glutamate 203; these read SSGHGQ and EGFI. The 190-residue stretch at 119 to 308 folds into the ATP-grasp domain; it reads RLAAEELGLK…QFALHARAIL (190 aa). Residues glutamate 267 and glutamate 279 each contribute to the Mg(2+) site. Residues aspartate 286, lysine 356, and 363-364 each bind N(1)-(5-phospho-beta-D-ribosyl)glycinamide; that span reads RR.

The protein belongs to the PurK/PurT family. In terms of assembly, homodimer.

It carries out the reaction N(1)-(5-phospho-beta-D-ribosyl)glycinamide + formate + ATP = N(2)-formyl-N(1)-(5-phospho-beta-D-ribosyl)glycinamide + ADP + phosphate + H(+). It functions in the pathway purine metabolism; IMP biosynthesis via de novo pathway; N(2)-formyl-N(1)-(5-phospho-D-ribosyl)glycinamide from N(1)-(5-phospho-D-ribosyl)glycinamide (formate route): step 1/1. In terms of biological role, involved in the de novo purine biosynthesis. Catalyzes the transfer of formate to 5-phospho-ribosyl-glycinamide (GAR), producing 5-phospho-ribosyl-N-formylglycinamide (FGAR). Formate is provided by PurU via hydrolysis of 10-formyl-tetrahydrofolate. The chain is Formate-dependent phosphoribosylglycinamide formyltransferase from Actinobacillus pleuropneumoniae serotype 5b (strain L20).